The chain runs to 122 residues: MARIAGVDLPRGKRVDIALTYIYGVGRATALEILDTTGVDWTRNIDDLSADEVNEIRKEIEQNHKVEGDLRREISSNIKRLMDIGCHRGLRHRRGLPARGQRTKTNARTRKGPRRGVAGKRK.

The disordered stretch occupies residues 89 to 122; sequence GLRHRRGLPARGQRTKTNARTRKGPRRGVAGKRK.

The protein belongs to the universal ribosomal protein uS13 family. In terms of assembly, part of the 30S ribosomal subunit. Forms a loose heterodimer with protein S19. Forms two bridges to the 50S subunit in the 70S ribosome.

Functionally, located at the top of the head of the 30S subunit, it contacts several helices of the 16S rRNA. In the 70S ribosome it contacts the 23S rRNA (bridge B1a) and protein L5 of the 50S subunit (bridge B1b), connecting the 2 subunits; these bridges are implicated in subunit movement. Contacts the tRNAs in the A and P-sites. The protein is Small ribosomal subunit protein uS13 of Oleidesulfovibrio alaskensis (strain ATCC BAA-1058 / DSM 17464 / G20) (Desulfovibrio alaskensis).